Reading from the N-terminus, the 400-residue chain is MGVKIIVPSLGESVTEATIAKWYKKEGDAVKTDELLLEIETEKVTLEVNSPCNGTIGKIIKADGANVAVGEEIGDINEGEAVATNSNEAAKPQTASQPVPEKVPKKPAVANNTLAPSVQKLVTENKLDPNNIKGTGKDGRITKGDVLETMNAPTPAATSTTSSAKASEERVERVRMSRLRKTIAQRLKDSQNTAAILTTFNEIDMSKVIALRGKYKDEFEKKHGVKLGFMSFFVRATIEALKLIPSVNAEIDGDDLVYKNYYDIGVAVGTEQGLVVPVVRDADKMGFADIEKTIGGLAKKARDGKLSMADLSGGTFSISNGGVYGSLLSTPIINPPQSGILGLHKTEERVVAIDGKIEIRPMMYIALSYDHRIIDGKEAVSFLVKIKELIESPEKLLLNL.

The region spanning 2–77 (GVKIIVPSLG…AVGEEIGDIN (76 aa)) is the Lipoyl-binding domain. Position 43 is an N6-lipoyllysine (Lys43). The span at 85-97 (NSNEAAKPQTASQ) shows a compositional bias: polar residues. Positions 85 to 113 (NSNEAAKPQTASQPVPEKVPKKPAVANNT) are disordered. The region spanning 113–150 (TLAPSVQKLVTENKLDPNNIKGTGKDGRITKGDVLETM) is the Peripheral subunit-binding (PSBD) domain. Active-site residues include His371 and Asp375.

It belongs to the 2-oxoacid dehydrogenase family. Forms a 24-polypeptide structural core with octahedral symmetry. Part of the 2-oxoglutarate dehydrogenase (OGDH) complex composed of E1 (2-oxoglutarate dehydrogenase), E2 (dihydrolipoamide succinyltransferase) and E3 (dihydrolipoamide dehydrogenase); the complex contains multiple copies of the three enzymatic components (E1, E2 and E3). (R)-lipoate serves as cofactor.

It carries out the reaction N(6)-[(R)-dihydrolipoyl]-L-lysyl-[protein] + succinyl-CoA = N(6)-[(R)-S(8)-succinyldihydrolipoyl]-L-lysyl-[protein] + CoA. It participates in amino-acid degradation; L-lysine degradation via saccharopine pathway; glutaryl-CoA from L-lysine: step 6/6. In terms of biological role, E2 component of the 2-oxoglutarate dehydrogenase (OGDH) complex which catalyzes the second step in the conversion of 2-oxoglutarate to succinyl-CoA and CO(2). This is Dihydrolipoyllysine-residue succinyltransferase component of 2-oxoglutarate dehydrogenase complex (sucB) from Rickettsia bellii (strain RML369-C).